The primary structure comprises 254 residues: C-X-C motif chemokine 16 (254 aa).

The N-terminal stretch at 1-29 (MGRDLRPGSRVLLLLLLLLLVYLTQPGNG) is a signal peptide. Residues 30–205 (NEGSVTGSCY…AGPTARTSAT (176 aa)) lie on the Extracellular side of the membrane. The tract at residues 32–107 (GSVTGSCYCG…DLKECGHAYS (76 aa)) is chemokine. Intrachain disulfides connect Cys38–Cys68 and Cys40–Cys82. Residues 146–165 (QSTQRPTLPVGSLSSDKELT) are disordered. The N-linked (GlcNAc...) asparagine glycan is linked to Asn168. The disordered stretch occupies residues 178 to 200 (SLAAGPEAGENQKQPEKNAGPTA). A helical transmembrane segment spans residues 206–226 (VPVLCLLAIIFILTAALSYVL). The Cytoplasmic portion of the chain corresponds to 227–254 (CKRRRGQSPQSSPDLPVHYIPVAPDSNT). Residues 231-254 (RGQSPQSSPDLPVHYIPVAPDSNT) are disordered.

This sequence belongs to the intercrine alpha (chemokine CxC) family. In terms of processing, glycosylated. Expressed in T-cell areas. Expressed in spleen, lymph nodes, lung, kidney, small intestine and thymus. Weak expression in heart and liver and no expression in brain and bone marrow.

The protein localises to the cell membrane. It is found in the secreted. Its function is as follows. Acts as a scavenger receptor on macrophages, which specifically binds to OxLDL (oxidized low density lipoprotein), suggesting that it may be involved in pathophysiology such as atherogenesis. Induces a strong chemotactic response. Induces calcium mobilization. Binds to CXCR6/Bonzo. The sequence is that of C-X-C motif chemokine 16 (CXCL16) from Homo sapiens (Human).